We begin with the raw amino-acid sequence, 809 residues long: Phenylalanine--tRNA ligase beta subunit (809 aa).

One can recognise a tRNA-binding domain in the interval 39 to 152 (KDKWPNVYVG…ADAPVGMLAS (114 aa)). One can recognise a B5 domain in the interval 404-492 (KDRNSVVLSL…RIAGYDTIPC (89 aa)). Mg(2+)-binding residues include Asp-470, Asp-476, Glu-479, and Glu-480. Positions 717 to 808 (NRFPSVERDL…LNTETGAVLR (92 aa)) constitute an FDX-ACB domain.

This sequence belongs to the phenylalanyl-tRNA synthetase beta subunit family. Type 1 subfamily. Tetramer of two alpha and two beta subunits. Mg(2+) is required as a cofactor.

The protein localises to the cytoplasm. The catalysed reaction is tRNA(Phe) + L-phenylalanine + ATP = L-phenylalanyl-tRNA(Phe) + AMP + diphosphate + H(+). This Dehalococcoides mccartyi (strain ATCC BAA-2266 / KCTC 15142 / 195) (Dehalococcoides ethenogenes (strain 195)) protein is Phenylalanine--tRNA ligase beta subunit.